A 407-amino-acid chain; its full sequence is ATP phosphoribosyltransferase regulatory subunit (407 aa).

It belongs to the class-II aminoacyl-tRNA synthetase family. HisZ subfamily. As to quaternary structure, heteromultimer composed of HisG and HisZ subunits.

Its subcellular location is the cytoplasm. Its pathway is amino-acid biosynthesis; L-histidine biosynthesis; L-histidine from 5-phospho-alpha-D-ribose 1-diphosphate: step 1/9. Its function is as follows. Required for the first step of histidine biosynthesis. May allow the feedback regulation of ATP phosphoribosyltransferase activity by histidine. In Rippkaea orientalis (strain PCC 8801 / RF-1) (Cyanothece sp. (strain PCC 8801)), this protein is ATP phosphoribosyltransferase regulatory subunit.